The primary structure comprises 103 residues: Large ribosomal subunit protein uL24 (103 aa).

This sequence belongs to the universal ribosomal protein uL24 family. As to quaternary structure, part of the 50S ribosomal subunit.

Its function is as follows. One of two assembly initiator proteins, it binds directly to the 5'-end of the 23S rRNA, where it nucleates assembly of the 50S subunit. In terms of biological role, one of the proteins that surrounds the polypeptide exit tunnel on the outside of the subunit. This Synechococcus sp. (strain CC9311) protein is Large ribosomal subunit protein uL24.